The primary structure comprises 2871 residues: Fibrillin-1 (2871 aa).

A signal peptide spans 1–24; the sequence is MRRGRLLEVALGFTVLLASYTSHR. Residues 25 to 44 constitute a propeptide that is removed on maturation; that stretch reads AEANLEAGNGKETRASRAKR. The span at 29–39 shows a compositional bias: basic and acidic residues; sequence LEAGNGKETRA. The tract at residues 29 to 49 is disordered; it reads LEAGNGKETRASRAKRRGGGG. Positions 45-81 are fibrillin unique N-terminal (FUN) domain; the sequence is RGGGGHDALKGPNVCGSRYNAYCCPGWKTLPGGNQCI. Residues 45-450 are N-terminal domain; the sequence is RGGGGHDALK…PPRVLPVNVT (406 aa). Intrachain disulfides connect C59–C68, C67–C80, C85–C94, C89–C100, C102–C111, C119–C129, C123–C134, C136–C145, C150–C160, C154–C166, and C168–C177. 3 consecutive EGF-like domains span residues 81–112, 115–146, and 147–178; these read IVPI…PSCG, SIQH…THCG, and QPVC…PQCE. The segment at 119-329 is interaction with MFAP4; that stretch reads CNIRCMNGGS…YTSPDGTRCI (211 aa). A TB 1 domain is found at 184-236; the sequence is GPCFTVVSNQMCQGQLSGIVCTKTLCCATVGRAWGHPCEMCPAQPHPCRRGFI. The hybrid domain 1 stretch occupies residues 195 to 221; it reads CQGQLSGIVCTKTLCCATVGRAWGHPC. An EGF-like 4; calcium-binding domain is found at 246 to 287; it reads DVDECQAIPGLCQGGNCINTVGSFECKCPAGHKFNEVSQKCE. 6 disulfide bridges follow: C250–C262, C257–C271, C273–C286, C292–C304, C299–C313, and C315–C328. O-linked (Glc) serine glycosylation occurs at S268. An EGF-like 5; calcium-binding domain is found at 288-329; that stretch reads DIDECSTIPGICDGGECTNTVSSYFCKCPPGFYTSPDGTRCI. A TB 2 domain is found at 334–389; that stretch reads GYCYTALTNGRCSNQLPQSITKMQCCCDVGRCWSPGVTVTPEMCPIRATEDFNKLC. N-linked (GlcNAc...) asparagine glycosylation is present at N448. Residues 449 to 489 enclose the EGF-like 6 domain; the sequence is VTDYCQLFRYLCHNGRCIPTPGSYRCECNKGFQLDLRGECI. Intrachain disulfides connect C453–C465, C460–C474, C476–C488, C494–C504, C499–C513, C515–C528, C534–C546, C541–C555, C557–C570, C576–C587, C582–C596, C598–C611, C617–C628, C623–C637, and C639–C652. A glycan (O-linked (Glc) serine) is linked at S471. Positions 490–529 constitute an EGF-like 7; calcium-binding domain; it reads DVDECEKNPCAGGECINNQGSYTCQCRPGYQSTLTRTECR. Residue S510 is glycosylated (O-linked (Glc) serine). The 42-residue stretch at 530–571 folds into the EGF-like 8; calcium-binding domain; it reads DIDECLQNGRICNNGRCINTDGSFHCVCNAGFHVTRDGKNCE. Positions 572–612 constitute an EGF-like 9; calcium-binding domain; the sequence is DMDECSIRNMCLNGMCINEDGSFKCICKPGFQLASDGRYCK. The region spanning 613–653 is the EGF-like 10; calcium-binding domain; sequence DINECETSGICMNGRCVNTDGSYRCECFPGLAVGLDGRVCV. In terms of domain architecture, TB 3 spans 659–711; sequence STCYGGYKRGQCVKPLFGAVTKSECCCASTEYAFGEPCQPCPSQNSAEYQALC. Positions 723–764 constitute an EGF-like 11; calcium-binding domain; sequence DINECALDPDICPNGICENLRGTYKCICNSGYEVDSTGKNCV. Disulfide bonds link C727–C739, C734–C748, C750–C763, C769–C781, C776–C790, C792–C805, C811–C821, C816–C830, C832–C845, C853–C875, C862–C887, C876–C890, C896–C908, C914–C926, C921–C935, and C937–C950. One can recognise an EGF-like 12; calcium-binding domain in the interval 765 to 806; that stretch reads DINECVLNSLLCDNGQCRNTPGSFVCTCPKGFIYKPDLKTCE. An EGF-like 13; calcium-binding domain is found at 807–846; it reads DIDECESSPCINGVCKNSPGSFICECSSESTLDPTKTICI. The 52-residue stretch at 851 to 902 folds into the TB 4 domain; sequence GTCWQTIIDGRCEININGATLKSQCCSSLGAAWGSPCTPCQVDPICGKGYSR. Positions 862 to 887 are hybrid domain 2; it reads CEININGATLKSQCCSSLGAAWGSPC. Residues 910-951 form the EGF-like 14; calcium-binding domain; it reads DIDECEVFPGVCKNGLCVNSKGSFKCQCPNGMTLDATGRICL. A TB 5 domain is found at 956 to 1008; it reads ETCFLRYEDEECTLPVVGRHRMDACCCSVGAAWGTEECEECPPRNTPEYEELC. Residues 1028–1069 enclose the EGF-like 15; calcium-binding domain; sequence DINECKMIPNLCTHGKCRNTIGSFKCRCDSGFALDSEERNCI. Intrachain disulfides connect C1032-C1044, C1039-C1053, C1055-C1068, C1074-C1086, C1081-C1095, C1097-C1111, C1117-C1129, C1124-C1138, C1140-C1153, C1159-C1171, C1201-C1212, C1208-C1221, C1223-C1236, C1242-C1254, C1249-C1263, C1265-C1278, C1284-C1296, C1291-C1305, C1307-C1320, C1326-C1339, C1333-C1348, C1350-C1361, C1367-C1380, C1374-C1389, C1391-C1402, C1408-C1420, C1415-C1429, C1450-C1461, C1456-C1470, C1472-C1485, C1491-C1502, C1497-C1511, C1513-C1526, C1534-C1562, C1549-C1574, C1563-C1577, C1564-C1589, C1610-C1622, C1617-C1631, C1633-C1646, C1652-C1663, C1658-C1672, and C1674-C1687. The EGF-like 16; calcium-binding domain occupies 1070–1112; sequence DIDECRISPDLCGRGQCVNTPGDFECKCDEGYESGFMMMKNCM. Positions 1113 to 1154 constitute an EGF-like 17; calcium-binding domain; that stretch reads DIDECQRDPLLCRGGVCLNTEGSYRCECPSGHQMSPNISACI. O-linked (Glc) serine glycosylation occurs at S1135. Residue N1149 is glycosylated (N-linked (GlcNAc...) asparagine). One can recognise an EGF-like 18; calcium-binding domain in the interval 1155–1196; it reads DINECELSAHLCPHGRCVNLIGKYQRARNPGYHSTPDRLFCV. One can recognise an EGF-like 19; calcium-binding domain in the interval 1197-1237; that stretch reads DIDECSIMNGGCETFCTNSEGSYECSCQPGFALMPDQRSCT. Residue S1218 is glycosylated (O-linked (Glc) serine). The region spanning 1238–1279 is the EGF-like 20; calcium-binding domain; it reads DIDECEDNPNICDGGQCTNIPGEYRCLCYDGFMASEDMKTCV. One can recognise an EGF-like 21; calcium-binding domain in the interval 1280–1321; the sequence is DVNECDLNPNICLSGTCENTKGSFICHCDMGYSGKKGKTGCT. A glycan (O-linked (Glc) serine) is linked at S1302. The 41-residue stretch at 1322 to 1362 folds into the EGF-like 22; calcium-binding domain; sequence DINECEIGAHNCDRHAVCTNTAGSFNCSCSPGWIGDGIKCT. S1345 is a glycosylation site (O-linked (Glc) serine). A glycan (N-linked (GlcNAc...) asparagine) is linked at N1347. Residues 1363–1403 enclose the EGF-like 23; calcium-binding domain; the sequence is DLDECSNGTHMCSQHADCKNTMGSYRCLCKEGYTGDGFTCA. The N-linked (GlcNAc...) asparagine glycan is linked to N1369. S1386 is a glycosylation site (O-linked (Glc) serine). The EGF-like 24; calcium-binding domain occupies 1404-1445; sequence DLDECSENVKLCGNVQCLYAPGGYHCEYDMGFVPSADRKSCV. Positions 1446 to 1486 constitute an EGF-like 25; calcium-binding domain; that stretch reads DSDECSLPNICVFGTCHNLPGLFRCECEIGYELDRSGGNCT. N1484 carries an N-linked (GlcNAc...) asparagine glycan. Residues 1487–1527 form the EGF-like 26; calcium-binding domain; that stretch reads DVNECLEPPTCISGNCVNTPGSYTCVCPPDFELNPTRVGCV. An O-linked (Glc) serine glycan is attached at S1508. The C-terminal domain stretch occupies residues 1528-2731; that stretch reads DTRSGNCYLD…GYPKRGRKRR (1204 aa). The TB 6 domain maps to 1532–1589; that stretch reads GNCYLDVRPRGDNGDTACSNEIGVGVSKASCCCSLGKAWGTPCEQCPPVNTSEYKILC. The short motif at 1541–1543 is the Cell attachment site element; sequence RGD. A glycan (N-linked (GlcNAc...) asparagine) is linked at N1581. Residues 1606–1647 enclose the EGF-like 27; calcium-binding domain; sequence DIDECQELPGLCQGGKCINTFGSFQCRCPTGYYLNEDTRVCD. An O-linked (Glc) serine glycan is attached at S1628. Positions 1648 to 1688 constitute an EGF-like 28; calcium-binding domain; it reads DVNECETPGICGPGTCYNTVGNYTCICPPDYMQVNGGNNCM. N-linked (GlcNAc...) asparagine glycosylation is present at N1669. Residues 1693 to 1748 form the TB 7 domain; that stretch reads SLCYRNYYADNQTCDGELLFNMTKKMCCCSYNIGRAWNKPCEQCPIPSTDEFATLC. Residues N1703 and N1713 are each glycosylated (N-linked (GlcNAc...) asparagine). Positions 1766-1807 constitute an EGF-like 29; calcium-binding domain; the sequence is DIDECREIPGVCENGVCINMVGSFRCECPVGFFYNDKLLVCE. Intrachain disulfides connect C1770–C1782, C1777–C1791, C1793–C1806, C1812–C1824, C1818–C1833, C1835–C1847, C1853–C1865, C1860–C1874, C1876–C1889, C1895–C1905, C1900–C1914, C1916–C1928, C1934–C1947, C1942–C1956, C1958–C1971, C1977–C1989, C1984–C1998, C2000–C2011, C2017–C2029, C2024–C2038, C2040–C2053, C2061–C2083, C2070–C2096, C2084–C2099, C2085–C2111, C2131–C2142, C2137–C2151, C2153–C2164, C2170–C2181, C2176–C2190, C2192–C2204, C2210–C2221, C2217–C2230, C2232–C2245, C2251–C2265, C2258–C2274, C2276–C2289, C2295–C2307, C2302–C2316, and C2318–C2331. One can recognise an EGF-like 30; calcium-binding domain in the interval 1808–1848; the sequence is DIDECQNGPVCQRNAECINTAGSYRCDCKPGYRFTSTGQCN. Residue S1830 is glycosylated (O-linked (Glc) serine). The region spanning 1849–1890 is the EGF-like 31; calcium-binding domain; that stretch reads DRNECQEIPNICSHGQCIDTVGSFYCLCHTGFKTNADQTMCL. An O-linked (Glc) serine glycan is attached at S1871. Residues 1891 to 1929 enclose the EGF-like 32; calcium-binding domain; that stretch reads DINECERDACGNGTCRNTIGSFNCRCNHGFILSHNNDCI. N1902 carries N-linked (GlcNAc...) asparagine glycosylation. S1911 is a glycosylation site (O-linked (Glc) serine). The 43-residue stretch at 1930–1972 folds into the EGF-like 33; calcium-binding domain; that stretch reads DVDECATGNGNLCRNGQCINTVGSFQCQCNEGYEVAPDGRTCV. S1953 is a glycosylation site (O-linked (Glc) serine). Positions 1973–2012 constitute an EGF-like 34; calcium-binding domain; sequence DINECLLEPGKCAPGTCQNLDGSYRCICPPGYSLQNDKCE. The EGF-like 35; calcium-binding domain occupies 2013–2054; sequence DIDECVEEPEICALGTCSNTEGSFKCLCPDGFSLSSTGRRCQ. Residue S2035 is glycosylated (O-linked (Glc) serine). The TB 8 domain occupies 2059-2111; that stretch reads SYCYAKFEGGKCSSPKSRNHSKQECCCALKGEGWGDPCELCPTEPDEAFRQIC. A glycan (N-linked (GlcNAc...) asparagine) is linked at N2077. An EGF-like 36; calcium-binding domain is found at 2127 to 2165; that stretch reads DMDECKEPDVCKHGQCINTDGSYRCECPFGYILEGNECV. S2148 carries an O-linked (Glc) serine glycan. The EGF-like 37; calcium-binding domain maps to 2166–2205; it reads DTDECSVGNPCGNGTCKNVIGGFECTCEEGFEPGPMMTCE. The N-linked (GlcNAc...) asparagine glycan is linked to N2178. The 41-residue stretch at 2206-2246 folds into the EGF-like 38; calcium-binding domain; the sequence is DINECAQNPLLCAFRCVNTYGSYECKCPTGYVLREDRRMCK. S2227 is a glycosylation site (O-linked (Glc) serine). Residues 2247–2290 enclose the EGF-like 39; calcium-binding domain; sequence DEDECEEGKHDCAEKQMECKNLIGMYICICGPGYQRRPDGEGCV. An EGF-like 40; calcium-binding domain is found at 2291–2332; it reads DENECQTKPGICENGRCLNTRGSYTCECNDGFTASPTQDECL. S2313 carries O-linked (Glc) serine glycosylation. In terms of domain architecture, TB 9 spans 2337 to 2390; sequence GYCFTEVLQNMCQIGSSNRNPVTKSECCCDGGRGWGPHCEICPFQGTVAFKKLC. The region spanning 2402-2443 is the EGF-like 41; calcium-binding domain; it reads DIDECKVIHDVCRNGECINDRGSYHCICKTGYTPDITGTACV. 21 disulfides stabilise this stretch: C2406–C2418, C2413–C2427, C2429–C2442, C2448–C2459, C2455–C2468, C2470–C2483, C2489–C2500, C2496–C2509, C2511–C2522, C2528–C2541, C2535–C2550, C2552–C2565, C2571–C2581, C2577–C2590, C2592–C2605, C2611–C2622, C2617–C2631, C2633–C2646, C2652–C2663, C2659–C2672, and C2674–C2686. Residues 2444 to 2484 enclose the EGF-like 42; calcium-binding domain; sequence DLNECNQAPKPCNFICKNTEGSYQCSCPKGYILQEDGRSCK. An O-linked (Glc) serine glycan is attached at S2465. Residues 2485 to 2523 form the EGF-like 43; calcium-binding domain; the sequence is DLDECATKQHNCQFLCVNTIGSFACKCPPGFTQHHTACI. Residues 2524–2566 form the EGF-like 44; calcium-binding domain; that stretch reads DNNECTSDINLCGAKGICQNTPGSFTCECQRGFSLDQSGASCE. O-linked (Glc) serine glycosylation is present at S2547. In terms of domain architecture, EGF-like 45; calcium-binding spans 2567–2606; the sequence is DVDECEGNHRCQHGCQNIIGGYRCSCPQGYLQHYQWNQCV. The region spanning 2607–2647 is the EGF-like 46; calcium-binding domain; that stretch reads DENECLSAHICGGASCHNTLGSYKCMCPAGFQYEQFSGGCQ. An O-linked (Glc) serine glycan is attached at S2628. The 40-residue stretch at 2648 to 2687 folds into the EGF-like 47; calcium-binding domain; that stretch reads DINECGSSQAPCSYGCSNTEGGYLCGCPPGYFRIGQGHCV. 2 positions are modified to phosphoserine: S2702 and S2709. N-linked (GlcNAc...) asparagine glycosylation is found at N2734, N2750, and N2767.

It belongs to the fibrillin family. In terms of assembly, interacts with COL16A1. Interacts with integrin alpha-V/beta-3. Interacts with ADAMTS10; this interaction promotes microfibril assembly. Interacts with THSD4; this interaction promotes fibril formation. Interacts (via N-terminal domain) with FBLN2 and FBLN5. Interacts with ELN. Forms a ternary complex with ELN and FBLN2 or FBLN5 and a significant interaction with ELN seen only in the presence of FBLN2 or FBLN5. Interacts (via N-terminal domain) with LTBP2 (via C-terminal domain) in a Ca(+2)-dependent manner. Interacts (via N-terminal domain) with LTBP1 (via C-terminal domain). Interacts with integrins ITGA5:ITGB1, ITGAV:ITGB3 and ITGAV:ITGB6. Interacts (via N-terminal domain) with BMP2, BMP4, BMP7, BMP10 and GDF5. Interacts (via N-terminal domain) with MFAP2 and MFAP5. Interacts with ADAMTSL5. Interacts with MFAP4. Interacts (via N-terminal domain) with TNFSF11 in a Ca(+2)-dependent manner. Interacts (via N-terminal domain) with EFEMP2; this interaction inhibits EFEMP2 binding to LOX and ELN. In terms of processing, cleavage of N- and C-terminus by furin is required for incorporation into the extracellular matrix and assembly into microfibrils. The C-terminus, which corresponds to the Asprosin chain, was initially thought to constitute a propeptide. Fibrillin-1 and Asprosin chains are still linked together during the secretion from cells, but are subsequently separated by furin, an essential step for incorporation of Fibrillin-1 into the nascent microfibrils. Forms intermolecular disulfide bonds either with other fibrillin-1 molecules or with other components of the microfibrils. Post-translationally, O-glycosylated on serine residues by POGLUT2 and POGLUT3 which is necessary for efficient protein secretion.

The protein resides in the secreted. It is found in the extracellular space. It localises to the extracellular matrix. Functionally, structural component of the 10-12 nm diameter microfibrils of the extracellular matrix, which conveys both structural and regulatory properties to load-bearing connective tissues. Fibrillin-1-containing microfibrils provide long-term force bearing structural support. In tissues such as the lung, blood vessels and skin, microfibrils form the periphery of the elastic fiber, acting as a scaffold for the deposition of elastin. In addition, microfibrils can occur as elastin-independent networks in tissues such as the ciliary zonule, tendon, cornea and glomerulus where they provide tensile strength and have anchoring roles. Fibrillin-1 also plays a key role in tissue homeostasis through specific interactions with growth factors, such as the bone morphogenetic proteins (BMPs), growth and differentiation factors (GDFs) and latent transforming growth factor-beta-binding proteins (LTBPs), cell-surface integrins and other extracellular matrix protein and proteoglycan components. Regulates osteoblast maturation by controlling TGF-beta bioavailability and calibrating TGF-beta and BMP levels, respectively. Negatively regulates osteoclastogenesis by binding and sequestering an osteoclast differentiation and activation factor TNFSF11. This leads to disruption of TNFSF11-induced Ca(2+) signaling and impairment of TNFSF11-mediated nuclear translocation and activation of transcription factor NFATC1 which regulates genes important for osteoclast differentiation and function. Mediates cell adhesion via its binding to cell surface receptors integrins ITGAV:ITGB3 and ITGA5:ITGB1. Binds heparin and this interaction plays an important role in the assembly of microfibrils. In terms of biological role, hormone that targets the liver to increase plasma glucose levels. Secreted by white adipose tissue and circulates in the plasma. Acts in response to fasting and promotes blood glucose elevation by binding to the surface of hepatocytes. Promotes hepatocyte glucose release by activating the protein kinase A activity in the liver, resulting in rapid glucose release into the circulation. This is Fibrillin-1 from Sus scrofa (Pig).